Reading from the N-terminus, the 259-residue chain is Probable metal transport system ATP-binding protein CPn_0348/CP_0412/CPj0348/CpB0355 (259 aa).

One can recognise an ABC transporter domain in the interval 3 to 241 (VKDETFWSVH…TIFQTYGCEI (239 aa)). 41-48 (GPNGAGKS) is an ATP binding site.

Belongs to the ABC transporter superfamily.

The protein resides in the cell inner membrane. In terms of biological role, part of an ATP-driven transport system CPn0346/CPn0347/CPn0348/CPn0349 for a metal. Probably responsible for energy coupling to the transport system. In Chlamydia pneumoniae (Chlamydophila pneumoniae), this protein is Probable metal transport system ATP-binding protein CPn_0348/CP_0412/CPj0348/CpB0355.